A 329-amino-acid polypeptide reads, in one-letter code: Transcription factor MYB2 (329 aa).

HTH myb-type domains follow at residues 17–69 (GGDL…LNYL) and 70–124 (RPDL…QKHA). 2 consecutive DNA-binding regions (H-T-H motif) follow at residues 45–69 (WNSL…LNYL) and 97–120 (WSKI…RTRV). 2 stretches are compositionally biased toward low complexity: residues 155 to 166 (AAAGQQQQQEGG) and 217 to 235 (LSST…GAGA). 2 disordered regions span residues 155 to 189 (AAAG…PELP) and 206 to 242 (GAQS…WPTQ).

As to expression, highly expressed in leaves. Expressed in roots and shoots. Expressed at low levels in flowers.

It localises to the nucleus. Functionally, transcription factor involved in abiotic stress responses. Plays a regulatory role in tolerance to salt, cold, and drought stresses. Positively regulates the expression of genes involved in proline synthesis and transport, and genes involved in reactive oxygen species (ROS) scavenging such as peroxidase, superoxide dismutase and catalase during salt stress. Transactivates stress-related genes, including LEA3, RAB16A and DREB2A during salt stress. The chain is Transcription factor MYB2 from Oryza sativa subsp. japonica (Rice).